A 610-amino-acid chain; its full sequence is Probable pleckstrin homology domain-containing family N member 1 (610 aa).

A disordered region spans residues 1–30 (MGNSHCVPQAPRRLRASFSRKPSLKGNRED). Gly2 carries N-myristoyl glycine lipidation. The interaction with C1QBP stretch occupies residues 61–100 (TDIPGPEHHPENLEQPFLSVFKKGWRRTPVRNLGKVVHYS). PH domains follow at residues 96 to 192 (VVHY…MALL) and 227 to 324 (AICA…SRRD). Tyr307 is subject to Phosphotyrosine. Disordered regions lie at residues 327-357 (HLPP…SNGR), 371-431 (QSLP…PLPL), 443-473 (LDSG…ATSR), and 493-610 (PGPD…IQWI). 2 stretches are compositionally biased toward polar residues: residues 371–380 (QSLPESSVPT) and 391–402 (NQTDSNCVSTGQ). Tyr462 is modified (phosphotyrosine). Positions 504–526 (VSVSVPVSESSSGISSSPGPLGS) are enriched in low complexity.

In terms of assembly, found in a complex with cytochrome c mRNA and various ribosomal proteins. Interacts with C1QBP, ELAVL1 and BID. In terms of processing, phosphorylation is essential for its mitochondrial localization and regulates its interaction with C1QBP. As to expression, testis and adipose tissue (at protein level). Ubiquitous.

Its subcellular location is the cell membrane. The protein resides in the mitochondrion membrane. The protein localises to the mitochondrion. Functionally, controls the stability of the leptin mRNA harboring an AU-rich element (ARE) in its 3' UTR, in cooperation with the RNA stabilizer ELAVL1. Decreases the stability of the leptin mRNA by antagonizing the function of ELAVL1 by inducing its atypical recruitment from the nucleus to the cytosol. Binds to cardiolipin (CL), phosphatidic acid (PA), phosphatidylinositol 4-phosphate (PtdIns(4)P) and phosphatidylserine (PS). The chain is Probable pleckstrin homology domain-containing family N member 1 (Plekhn1) from Mus musculus (Mouse).